The following is a 103-amino-acid chain: Large ribosomal subunit protein uL24 (103 aa).

This sequence belongs to the universal ribosomal protein uL24 family. In terms of assembly, part of the 50S ribosomal subunit.

Its function is as follows. One of two assembly initiator proteins, it binds directly to the 5'-end of the 23S rRNA, where it nucleates assembly of the 50S subunit. In terms of biological role, one of the proteins that surrounds the polypeptide exit tunnel on the outside of the subunit. This chain is Large ribosomal subunit protein uL24, found in Geobacillus stearothermophilus (Bacillus stearothermophilus).